Reading from the N-terminus, the 127-residue chain is Protein B20 (127 aa).

The interval 86–127 is disordered; that stretch reads DRTGMNSESDSESDNISIKTEYENEYEFYDETQDQSTQHNDL. Acidic residues predominate over residues 108–118; that stretch reads ENEYEFYDETQ.

This chain is Protein B20, found in Homo sapiens (Human).